The sequence spans 596 residues: Alpha-1,3-galactosidase A (596 aa).

Residues 1 to 21 form the signal peptide; it reads MQNPVASLLFILAMLTGPCPA. A disordered region spans residues 23–57; that stretch reads DYPERTERTQSAGNHVWHIDPDKGNDGNPGTAPST. PbH1 repeat units follow at residues 351-373, 482-504, 515-537, and 547-569; these read RGKI…NVHG, RKPV…LVED, VRNM…QIVP, and HRNI…RIRH.

It belongs to the glycosyl hydrolase 110 family. A subfamily.

It carries out the reaction Hydrolysis of terminal, non-reducing branched (1-&gt;3)-alpha-D-galactosidic residues, producing free D-galactose.. It catalyses the reaction Hydrolysis of terminal, non-reducing alpha-D-galactose residues in alpha-D-galactosides, including galactose oligosaccharides, galactomannans and galactolipids.. Functionally, alpha-galactosidase that specifically removes branched alpha-1,3-linked galactose residues present in blood group B antigens. Has no activity toward linear alpha-1,3-linked galactose residues. This Akkermansia muciniphila (strain ATCC BAA-835 / DSM 22959 / JCM 33894 / BCRC 81048 / CCUG 64013 / CIP 107961 / Muc) protein is Alpha-1,3-galactosidase A (glaA).